Reading from the N-terminus, the 70-residue chain is Protein SlyX homolog (70 aa).

Belongs to the SlyX family.

The protein is Protein SlyX homolog of Shewanella woodyi (strain ATCC 51908 / MS32).